Here is a 428-residue protein sequence, read N- to C-terminus: Peptidase B (428 aa).

Mn(2+) contacts are provided by lysine 195 and aspartate 200. Residue lysine 207 is part of the active site. 3 residues coordinate Mn(2+): aspartate 218, aspartate 277, and glutamate 279. Arginine 281 is a catalytic residue.

This sequence belongs to the peptidase M17 family. In terms of assembly, homohexamer. It depends on Mn(2+) as a cofactor.

The protein resides in the cytoplasm. The catalysed reaction is Release of an N-terminal amino acid, Xaa, from a peptide or arylamide. Xaa is preferably Glu or Asp but may be other amino acids, including Leu, Met, His, Cys and Gln.. Functionally, probably plays an important role in intracellular peptide degradation. The chain is Peptidase B from Cronobacter sakazakii (strain ATCC BAA-894) (Enterobacter sakazakii).